The primary structure comprises 113 residues: UPF0060 membrane protein CV_3485 (113 aa).

The next 4 helical transmembrane spans lie at 12–32, 37–57, 67–87, and 91–111; these read GLFVLTALAEIVGCYLPWLVL, SLWLLAPTTLALALFAWLLTL, AAYGGVYVTVAIAWLWLVDGV, and RWDALGCALALAGMAVIMLAP.

It belongs to the UPF0060 family.

Its subcellular location is the cell inner membrane. This chain is UPF0060 membrane protein CV_3485, found in Chromobacterium violaceum (strain ATCC 12472 / DSM 30191 / JCM 1249 / CCUG 213 / NBRC 12614 / NCIMB 9131 / NCTC 9757 / MK).